Reading from the N-terminus, the 178-residue chain is Actin-related protein 2/3 complex subunit 3 (178 aa).

K29 participates in a covalent cross-link: Glycyl lysine isopeptide (Lys-Gly) (interchain with G-Cter in ubiquitin).

It belongs to the ARPC3 family. In terms of assembly, component of the Arp2/3 complex composed of ARP2, ARP3, ARC40/p41-ARC, ARC35/p34-ARC, ARC18/p21-ARC, ARC19/p20-ARC and ARC16/p16-ARC.

Its subcellular location is the cytoplasm. The protein localises to the cytoskeleton. Its function is as follows. Functions as a component of the Arp2/3 complex which is involved in regulation of actin polymerization and together with an activating nucleation-promoting factor (NPF) mediates the formation of branched actin networks. The polypeptide is Actin-related protein 2/3 complex subunit 3 (ARC18) (Saccharomyces cerevisiae (strain ATCC 204508 / S288c) (Baker's yeast)).